A 235-amino-acid polypeptide reads, in one-letter code: MEEETHTDAKIRAENGTGSSPRGPGCSLRHFACEQNLLSRPDGSASFLQGDTSVLAGVYGPAEVKVSKEIFNKATLEVILRPKIGLPGVAEKSRERLIRNTCEAVVLGTLHPRTSITVVLQVVSDAGSLLACCLNAACMALVDAGVPMRALFCGVACALDSDGTLVLDPTSKQEKEARAVLTFALDSVERKLLMSSTKGLYSDTELQQCLAAAQAASQHVFRFYRESLQRRYSKS.

The segment covering 1 to 13 (MEEETHTDAKIRA) has biased composition (basic and acidic residues). The tract at residues 1-24 (MEEETHTDAKIRAENGTGSSPRGP) is disordered. Position 20 is a phosphoserine (serine 20).

This sequence belongs to the RNase PH family. As to quaternary structure, homodimer. Component of the RNA exosome core complex (Exo-9), composed of EXOSC1, EXOSC2, EXOSC3, EXOSC4, EXOSC5, EXOSC6, EXOSC7, EXOSC8 and EXOSC9; within the complex interacts with EXOSC3, EXOSC8, and EXOSC9. The catalytically inactive RNA exosome core complex (Exo-9) associates with the catalytic subunit EXOSC10/RRP6. Exo-9 may associate with DIS3 to form the nucleolar exosome complex, or DIS3L to form the cytoplasmic exosome complex. Exo-9 is formed by a hexameric base ring consisting of the heterodimers EXOSC4-EXOSC9, EXOSC5-EXOSC8 and EXOSC6-EXOSC7, and a cap ring consisting of EXOSC1, EXOSC2 and EXOSC3. The RNA exosome complex associates with cofactors C1D/RRP47, MPHOSPH6/MPP6 and MTREX/MTR4. Interacts with GTPBP1. Interacts with ZC3HAV1. Interacts with DDX17 only in the presence of ZC3HAV1 in an RNA-independent manner. As to expression, highly expressed in a variety of hematopoietic and epithelial tumor cell lines, but not in normal hematopoietic tissues or other normal tissue, with the exception of testis.

It localises to the nucleus. The protein localises to the nucleolus. The protein resides in the cytoplasm. Non-catalytic component of the RNA exosome complex which has 3'-&gt;5' exoribonuclease activity and participates in a multitude of cellular RNA processing and degradation events. In the nucleus, the RNA exosome complex is involved in proper maturation of stable RNA species such as rRNA, snRNA and snoRNA, in the elimination of RNA processing by-products and non-coding 'pervasive' transcripts, such as antisense RNA species and promoter-upstream transcripts (PROMPTs), and of mRNAs with processing defects, thereby limiting or excluding their export to the cytoplasm. The RNA exosome may be involved in Ig class switch recombination (CSR) and/or Ig variable region somatic hypermutation (SHM) by targeting AICDA deamination activity to transcribed dsDNA substrates. In the cytoplasm, the RNA exosome complex is involved in general mRNA turnover and specifically degrades inherently unstable mRNAs containing AU-rich elements (AREs) within their 3' untranslated regions, and in RNA surveillance pathways, preventing translation of aberrant mRNAs. It seems to be involved in degradation of histone mRNA. The catalytic inactive RNA exosome core complex of 9 subunits (Exo-9) is proposed to play a pivotal role in the binding and presentation of RNA for ribonucleolysis, and to serve as a scaffold for the association with catalytic subunits and accessory proteins or complexes. In vitro, EXOSC5 does not bind or digest single-stranded RNA and binds to double-stranded DNA without detectable DNase activity. The sequence is that of Exosome complex component RRP46 (EXOSC5) from Homo sapiens (Human).